The sequence spans 358 residues: Photosystem II protein D1 (358 aa).

Transmembrane regions (helical) follow at residues Tyr28–Ile45, His117–Leu132, and Trp141–Ala155. His117 lines the chlorophyll a pocket. Trp125 serves as a coordination point for pheophytin a. Residues Asp169 and Glu188 each contribute to the [CaMn4O5] cluster site. The chain crosses the membrane as a helical span at residues Phe196–Leu217. His197 provides a ligand contact to chlorophyll a. Residues His214 and Ser263 to Phe264 contribute to the a quinone site. Fe cation is bound at residue His214. Fe cation is bound at residue His271. A helical transmembrane segment spans residues Phe273–Leu287. [CaMn4O5] cluster-binding residues include His331, Glu332, Asp341, and Ala343. Residues Ala344–Gly358 constitute a propeptide that is removed on maturation.

Belongs to the reaction center PufL/M/PsbA/D family. PSII is composed of 1 copy each of membrane proteins PsbA, PsbB, PsbC, PsbD, PsbE, PsbF, PsbH, PsbI, PsbJ, PsbK, PsbL, PsbM, PsbT, PsbX, PsbY, Psb30/Ycf12, peripheral proteins PsbO, CyanoQ (PsbQ), PsbU, PsbV and a large number of cofactors. It forms dimeric complexes. The D1/D2 heterodimer binds P680, chlorophylls that are the primary electron donor of PSII, and subsequent electron acceptors. It shares a non-heme iron and each subunit binds pheophytin, quinone, additional chlorophylls, carotenoids and lipids. D1 provides most of the ligands for the Mn4-Ca-O5 cluster of the oxygen-evolving complex (OEC). There is also a Cl(-1) ion associated with D1 and D2, which is required for oxygen evolution. The PSII complex binds additional chlorophylls, carotenoids and specific lipids. serves as cofactor. Tyr-160 forms a radical intermediate that is referred to as redox-active TyrZ, YZ or Y-Z. In terms of processing, C-terminally processed by CtpA; processing is essential to allow assembly of the oxygen-evolving complex and thus photosynthetic growth.

Its subcellular location is the cellular thylakoid membrane. The enzyme catalyses 2 a plastoquinone + 4 hnu + 2 H2O = 2 a plastoquinol + O2. Its function is as follows. Photosystem II (PSII) is a light-driven water:plastoquinone oxidoreductase that uses light energy to abstract electrons from H(2)O, generating O(2) and a proton gradient subsequently used for ATP formation. It consists of a core antenna complex that captures photons, and an electron transfer chain that converts photonic excitation into a charge separation. The D1/D2 (PsbA/PsbD) reaction center heterodimer binds P680, the primary electron donor of PSII as well as several subsequent electron acceptors. The chain is Photosystem II protein D1 from Prochlorococcus marinus (strain MIT 9313).